The sequence spans 207 residues: Small ribosomal subunit protein bS6c (207 aa).

The transit peptide at 1–59 (MASSLCVSNSTICPLPNVSSQPLLSFSHSLRPFISKSKPMCASIQKRDGSQFVVKSQAL) directs the protein to the chloroplast. Residues 69–99 (GFGSDDDPTSPSGSGVSTALEDKPEPQCPPG) are disordered. Low complexity predominate over residues 77 to 86 (TSPSGSGVST).

The protein belongs to the bacterial ribosomal protein bS6 family. As to quaternary structure, part of the 30S ribosomal subunit.

It localises to the plastid. The protein localises to the chloroplast. Its function is as follows. Binds together with bS18 to 16S ribosomal RNA. The polypeptide is Small ribosomal subunit protein bS6c (RPS6) (Arabidopsis thaliana (Mouse-ear cress)).